A 1077-amino-acid polypeptide reads, in one-letter code: ATP-dependent helicase HRQ1 (1077 aa).

One can recognise a Helicase ATP-binding domain in the interval 299–483 (INSLHQGENV…DMFGINEVTL (185 aa)). Position 312 to 319 (312 to 319 (TSTSSGKS)) interacts with ATP. The short motif at 423-426 (DELH) is the DEAH box element. In terms of domain architecture, Helicase C-terminal spans 521-678 (ILVQLILNNV…DLVLDFNNIL (158 aa)).

The protein belongs to the helicase family. HRQ1 subfamily. As to quaternary structure, forms heptamer rings. Interacts with RAD4. Requires Mg(2+) as cofactor.

The protein localises to the nucleus. It carries out the reaction Couples ATP hydrolysis with the unwinding of duplex DNA by translocating in the 3'-5' direction.. The enzyme catalyses ATP + H2O = ADP + phosphate + H(+). Functionally, helicase with 3'-5' helicase activity involved in genome stability. Functions in the RAD4-dependent nucleotide excision repair (NER) pathway and plays a critical role in DNA interstrand cross-link repair. Unwinds relatively long duplex DNA up to 120-bp and requires a long 3'-tail of at least 70 nucleotides for efficient unwinding of duplex DNA. Activity is significantly stimulated by a preexisting fork structure. Shows both processive helicase and DNA strand annealing activities. Affects telomere length by a non-catalytic mechanism, probably through inhibiting telomerase by competing with it for ssDNA binding. In Saccharomyces cerevisiae (strain ATCC 204508 / S288c) (Baker's yeast), this protein is ATP-dependent helicase HRQ1.